The following is a 149-amino-acid chain: Transcription factor Atoh7 (149 aa).

The region spanning 41-93 (RRRLAANARERRRMQGLNTAFDRLRRVVPQWGQDKKLSKYETLQMALSYIIAL) is the bHLH domain.

As to quaternary structure, forms a heterodimer with TCF3 isoform E47; interaction may be required for DNA-binding in certain situations. In terms of tissue distribution, expressed in retinal ganglion cells. Expressed in the cerebellum, trapezoid body, ventral nucleus of the lateral lamniscus and in areas of the auditory hindbrain such as the cochlear nucleus, lateral superior olive and medial nucleus of the trapezoid body. Expressed in the modiolar nerve root and in the cochlear in a small group of bushy neurons within the acoustic nerve. Expressed weakly in the sensory epithelia of the saccule and utricle.

The protein resides in the nucleus. It localises to the perikaryon. The protein localises to the cell projection. It is found in the axon. In terms of biological role, transcription factor that binds to DNA at the consensus sequence 5'-CAG[GC]TG-3'. Dimerization with TCF3 isoform E47 may be required in certain situations. Binds to gene promoters and enhancer elements, and thereby regulates a transcriptional program of retinal ganglion cell (RGC) determinant genes. Although the exact mechanism is not certain, retinal transcription regulation by ATOH7 has a role in RGC determination and survival, photoreceptor population development, targeting of RGC axons to the optic nerve and development of the retino-hypothalamic tract. Binds to its own promoter and enhancer sequences, suggesting autoregulation of ATOH7 transcription. Required for retinal circadian rhythm photoentrainment. Plays a role in brainstem auditory signaling and binaural processing. The chain is Transcription factor Atoh7 from Mus musculus (Mouse).